We begin with the raw amino-acid sequence, 837 residues long: Amyloid-beta A4 precursor protein-binding family A member 1 (837 aa).

3 disordered regions span residues 1 to 93 (MNHL…DTAE), 238 to 342 (YDER…SKEK), and 358 to 435 (EEVK…ESRK). Over residues 23-38 (ESVEADLEHPEVEEEQ) the composition is skewed to acidic residues. Ser78, Ser242, Ser246, Ser248, Ser263, Ser280, and Ser285 each carry phosphoserine. Residues 226–314 (YRQEALGARL…TPAGGRPDSP (89 aa)) form a munc-18-1 binding region. Residues 238-254 (YDERSDGESDSPEKEAE) are compositionally biased toward basic and acidic residues. Residue Thr305 is modified to Phosphothreonine. Phosphoserine occurs at positions 313 and 367. At Thr370 the chain carries Phosphothreonine. Positions 373–436 (EPKEPIWVMR…ASTNKESRKS (64 aa)) are LIN-2/CASK binding. Over residues 387 to 398 (PTRDCDDQRPMD) the composition is skewed to basic and acidic residues. A compositionally biased stretch (low complexity) spans 399 to 418 (GDSPSPGSSSPLGAESSSTS). Phosphoserine is present on residues Ser401, Ser403, Ser408, and Ser568. The PID domain maps to 457–643 (DGIIFAANYL…LLNTQDMYND (187 aa)). The tract at residues 626-641 (LSQKEYSDLLNTQDMY) is autoinhibitory helix linker. PDZ domains follow at residues 656–742 (DVFI…IVRC) and 747–822 (TVLI…TMPA).

As to quaternary structure, part of a multimeric complex containing STXBP1 and STX1A. Interacts with STXBP1. Also part of the brain-specific heterotrimeric complex LIN-10/X11-alpha, LIN-2/CASK, and LIN7. Component of the brain-specific heterotrimeric complex (LIN-10-LIN-2-LIN-7 complex) composed of at least APBA1, CASK, and LIN7, which associates with the motor protein KIF17 to transport vesicles along microtubules. Within the complex, interacts (via PDZ domain) with the motor protein KIF17; the interaction is direct and is required for association of KIF17 with the cargo that is to be transported. Both isoform 1 and isoform 2 bind to the cytoplasmic domain of amyloid protein (APP). Interacts (via PDZ 1 and 2 domains) with FSPB. Isoform 2, but not isoform 1, interacts (via its truncated PID domain) with active, GTP-bound RAB6A and RAB6B. As to expression, brain and spinal cord. Isoform 2 is expressed in testis and brain, but not detected in lung, liver or spleen.

The protein resides in the cytoplasm. The protein localises to the perinuclear region. It is found in the nucleus. Its subcellular location is the golgi apparatus. Functionally, putative function in synaptic vesicle exocytosis by binding to Munc18-1, an essential component of the synaptic vesicle exocytotic machinery. May modulate processing of the amyloid-beta precursor protein (APP) and hence formation of APP-beta. Component of the LIN-10-LIN-2-LIN-7 complex, which associates with the motor protein KIF17 to transport vesicles containing N-methyl-D-aspartate (NMDA) receptor subunit NR2B along microtubules. In Homo sapiens (Human), this protein is Amyloid-beta A4 precursor protein-binding family A member 1 (APBA1).